The primary structure comprises 968 residues: RNA polymerase-associated protein RapA (968 aa).

The Helicase ATP-binding domain maps to 163 to 332 (EVGRRYAPRV…FARLRLLDPD (170 aa)). 176-183 (DEVGLGKT) provides a ligand contact to ATP. A DEAH box motif is present at residues 278-281 (DEAH). Residues 491 to 643 (RVDWLIAFLK…ELTCPSGHVL (153 aa)) enclose the Helicase C-terminal domain.

This sequence belongs to the SNF2/RAD54 helicase family. RapA subfamily. As to quaternary structure, interacts with the RNAP. Has a higher affinity for the core RNAP than for the holoenzyme. Its ATPase activity is stimulated by binding to RNAP.

Its function is as follows. Transcription regulator that activates transcription by stimulating RNA polymerase (RNAP) recycling in case of stress conditions such as supercoiled DNA or high salt concentrations. Probably acts by releasing the RNAP, when it is trapped or immobilized on tightly supercoiled DNA. Does not activate transcription on linear DNA. Probably not involved in DNA repair. The protein is RNA polymerase-associated protein RapA of Shewanella putrefaciens (strain CN-32 / ATCC BAA-453).